Here is a 405-residue protein sequence, read N- to C-terminus: Indoleamine 2,3-dioxygenase 2 (405 aa).

His347 contacts heme.

It belongs to the indoleamine 2,3-dioxygenase family. Requires heme as cofactor. In terms of tissue distribution, expressed mainly in antigen-presenting immune cells, liver, kidney, brain, and placenta. Highly expressed in kidney, followed by epididymis and liver (at protein level). Detected in the tails of the spermatozoa in the testis and in the kidney tubules (at protein level). Constitutively expressed in brain.

It carries out the reaction L-tryptophan + O2 = N-formyl-L-kynurenine. Its pathway is amino-acid degradation; L-tryptophan degradation via kynurenine pathway; L-kynurenine from L-tryptophan: step 1/2. With respect to regulation, activity is inhibited by D-1MT (1-methyl-D-tryptophan) and MTH-trp (methylthiohydantoin-DL-tryptophan) but not L-1MT (1-methyl-L-tryptophan). Its function is as follows. Catalyzes the first and rate-limiting step in the kynurenine pathway of tryptophan catabolism. Involved in immune regulation. This is Indoleamine 2,3-dioxygenase 2 from Mus musculus (Mouse).